Reading from the N-terminus, the 437-residue chain is Nuclear hormone receptor family member nhr-28 (437 aa).

The nuclear receptor DNA-binding region spans Lys-5–Arg-80. NR C4-type zinc fingers lie at residues Cys-8–Cys-28 and Cys-44–Cys-68. Residues Tyr-115–Arg-376 form the NR LBD domain.

Belongs to the nuclear hormone receptor family. As to expression, expressed in the pharynx, intestine and hypodermis.

It is found in the nucleus. Orphan nuclear receptor. The chain is Nuclear hormone receptor family member nhr-28 (nhr-28) from Caenorhabditis elegans.